A 225-amino-acid chain; its full sequence is Uracil-DNA glycosylase (225 aa).

The Proton acceptor role is filled by aspartate 65.

This sequence belongs to the uracil-DNA glycosylase (UDG) superfamily. UNG family.

Its subcellular location is the cytoplasm. The enzyme catalyses Hydrolyzes single-stranded DNA or mismatched double-stranded DNA and polynucleotides, releasing free uracil.. Excises uracil residues from the DNA which can arise as a result of misincorporation of dUMP residues by DNA polymerase or due to deamination of cytosine. This is Uracil-DNA glycosylase from Clostridium botulinum (strain Alaska E43 / Type E3).